Reading from the N-terminus, the 126-residue chain is Protein translocase subunit SecE (126 aa).

3 helical membrane-spanning segments follow: residues 18-38 (LKWV…YLYG), 40-60 (LSVV…LGVA), and 97-117 (IVLA…GIMV).

This sequence belongs to the SecE/SEC61-gamma family. As to quaternary structure, component of the Sec protein translocase complex. Heterotrimer consisting of SecY, SecE and SecG subunits. The heterotrimers can form oligomers, although 1 heterotrimer is thought to be able to translocate proteins. Interacts with the ribosome. Interacts with SecDF, and other proteins may be involved. Interacts with SecA.

The protein localises to the cell inner membrane. Essential subunit of the Sec protein translocation channel SecYEG. Clamps together the 2 halves of SecY. May contact the channel plug during translocation. In Vibrio cholerae serotype O1 (strain ATCC 39315 / El Tor Inaba N16961), this protein is Protein translocase subunit SecE.